A 114-amino-acid chain; its full sequence is MLKKILSLFKKEEPKTEEKPTEVEEKKEEREEKEEKKVRELTPQELELFKRAMGITPHNYWQWASRTNNFKLLTDGEWVWVEGYEEHIGKQLPLNQARAWSWEFIKNRLKELNL.

Residues 1 to 37 (MLKKILSLFKKEEPKTEEKPTEVEEKKEEREEKEEKK) are disordered. A compositionally biased stretch (basic and acidic residues) spans 9 to 37 (FKKEEPKTEEKPTEVEEKKEEREEKEEKK).

This is an uncharacterized protein from Aquifex aeolicus (strain VF5).